A 126-amino-acid polypeptide reads, in one-letter code: MGPLGFVAVGVGAAAGAWLRWGFAVLWNAINPALPYGTLAANLLGGYLVGLAVGFFDTHAGLPPEWRLLAITGFLGGLTTFSTFSSEVVANLIAGDYGWAGLHLLLHLGGSLLLTAFGLWTYRLLA.

The next 4 membrane-spanning stretches (helical) occupy residues 6–26 (FVAV…FAVL), 36–56 (YGTL…VGFF), 69–89 (LAIT…SEVV), and 99–119 (WAGL…AFGL). The Na(+) site is built by G76 and T79.

This sequence belongs to the fluoride channel Fluc/FEX (TC 1.A.43) family.

It is found in the cell inner membrane. It catalyses the reaction fluoride(in) = fluoride(out). Na(+) is not transported, but it plays an essential structural role and its presence is essential for fluoride channel function. Fluoride-specific ion channel. Important for reducing fluoride concentration in the cell, thus reducing its toxicity. The protein is Fluoride-specific ion channel FluC of Cupriavidus necator (strain ATCC 17699 / DSM 428 / KCTC 22496 / NCIMB 10442 / H16 / Stanier 337) (Ralstonia eutropha).